Here is a 255-residue protein sequence, read N- to C-terminus: Ly6/PLAUR domain-containing protein 8 (255 aa).

Residues Met-1 to Ser-20 form the signal peptide. Asn-22, Asn-30, Asn-53, Asn-72, Asn-76, Asn-105, Asn-115, Asn-128, Asn-154, Asn-169, Asn-179, Asn-200, and Asn-210 each carry an N-linked (GlcNAc...) asparagine glycan. Residues Cys-121–Ser-170 form the UPAR/Ly6 domain. Residue Ser-233 is the site of GPI-anchor amidated serine attachment. Residues Met-234–Phe-255 constitute a propeptide, removed in mature form.

It belongs to the CNF-like-inhibitor family. Highly N-glycosylated. Not O-glycosylated. In terms of processing, GPI-anchored. The GPI-anchor is cleaved, leading to secretion into the colonic lumen. Specifically present in enterocytes located at the uppermost epithelial layer of the colon (at protein level). Exclusively expressed in the large intestine: specifically expressed on the apical surface of epithelial cells located at the uppermost layer of the colonic gland.

The protein localises to the cell membrane. The protein resides in the secreted. Secreted protein specifically required to prevent invasion of Gram-negative bacteria in the inner mucus layer of the colon epithelium, a portion of the large intestine which is free of commensal microbiota. Prevents invasion of flagellated microbiota by binding to the flagellum of bacteria, such as P.mirabilis, thereby inhibiting bacterial motility in the intestinal lumen. Segregation of intestinal bacteria and epithelial cells in the colon is required to preserve intestinal homeostasis. This Mus musculus (Mouse) protein is Ly6/PLAUR domain-containing protein 8.